The primary structure comprises 415 residues: Phosphoribosylamine--glycine ligase (415 aa).

The 204-residue stretch at 108–311 (KKIMKKYNIP…LMQHIIDLDE (204 aa)) folds into the ATP-grasp domain. ATP is bound at residue 134–191 (IENCELPVVVKKDGLAAGKGVIIADTIEAARSAIEIMYGDEEEGTVVFETFLEGEEFS). Mg(2+) contacts are provided by Glu-281 and Asn-283.

It belongs to the GARS family. Mg(2+) serves as cofactor. The cofactor is Mn(2+).

It catalyses the reaction 5-phospho-beta-D-ribosylamine + glycine + ATP = N(1)-(5-phospho-beta-D-ribosyl)glycinamide + ADP + phosphate + H(+). Its pathway is purine metabolism; IMP biosynthesis via de novo pathway; N(1)-(5-phospho-D-ribosyl)glycinamide from 5-phospho-alpha-D-ribose 1-diphosphate: step 2/2. This Staphylococcus aureus (strain Mu50 / ATCC 700699) protein is Phosphoribosylamine--glycine ligase.